The primary structure comprises 393 residues: MNGLLHMHGPAVKKLLGWKIGEDEEKWCEKAVEALVKKLKKKNNGCGTLEDLECVLANPCTNSRCITIAKSLDGRLQVSHKKGLPHVIYCRVWRWPDISSPHELRSIDTCSYPYESSSKTMYICINPYHYQRLSRPQGLNSSMPSPQPISSPNTIWQSSGSSTASCASSPSPSVFSEDGGEVQVHQRPPPFRHPKSWAQITYFELNSRVGEVFKLVNLSITVDGYTNPSNSNTRICLGQLTNVNRNGTIENTRMHIGKGIQLDNKEDQMHIMITNNSDMPVFVQSKNTNLMMNMPLVKVCRIPPHSQLCVFEFNLFFQMLEQSCNDSDGLNELSKHCFIRISFVKGWGEDYPRQDVTSTPCWLELRLNVPLAYIDQKMKQTPRTNLMEPNSMT.

The 130-residue stretch at 10 to 139 (PAVKKLLGWK…YQRLSRPQGL (130 aa)) folds into the MH1 domain. The Zn(2+) site is built by C65, C110, C124, and H129. The disordered stretch occupies residues 136–190 (PQGLNSSMPSPQPISSPNTIWQSSGSSTASCASSPSPSVFSEDGGEVQVHQRPPP). Residues 141–176 (SSMPSPQPISSPNTIWQSSGSSTASCASSPSPSVFS) show a composition bias toward low complexity. The MH2 domain occupies 197 to 393 (WAQITYFELN…TNLMEPNSMT (197 aa)).

It belongs to the dwarfin/SMAD family.

The protein resides in the cytoplasm. It is found in the nucleus. Its function is as follows. Involved in TGF-beta pathway. Plays a role in male tail tip morphogenesis. The polypeptide is Dwarfin sma-3 (Caenorhabditis elegans).